The chain runs to 41 residues: Mu-conotoxin pn4c (41 aa).

Positions 1–24 (DQPAERMQDDISSEHHPFFDPVKR) are excised as a propeptide.

This sequence belongs to the conotoxin M superfamily. Post-translationally, contains 3 disulfide bonds. They are not added, since framework IV presents two different connectivities (I-V, II-III, IV-VI and I-III, II-V, IV-VI). Expressed by the venom duct.

The protein localises to the secreted. Mu-conotoxins block voltage-gated sodium channels (Nav). Blocks reversibly sodium channels in molluskan neurons, but has no effect on sodium currents in bovine chromaffin cells or in rat brain synaptosomes. Induces paralysis in mollusks (C.retripictus). This Conus pennaceus (Feathered cone) protein is Mu-conotoxin pn4c.